Reading from the N-terminus, the 224-residue chain is Urease accessory protein UreF (224 aa).

This sequence belongs to the UreF family. UreD, UreF and UreG form a complex that acts as a GTP-hydrolysis-dependent molecular chaperone, activating the urease apoprotein by helping to assemble the nickel containing metallocenter of UreC. The UreE protein probably delivers the nickel.

The protein resides in the cytoplasm. Functionally, required for maturation of urease via the functional incorporation of the urease nickel metallocenter. This chain is Urease accessory protein UreF, found in Methylorubrum populi (strain ATCC BAA-705 / NCIMB 13946 / BJ001) (Methylobacterium populi).